Here is a 491-residue protein sequence, read N- to C-terminus: Probable aspartyl aminopeptidase (491 aa).

A Zn(2+)-binding site is contributed by His90. His168 contributes to the substrate binding site. Position 278 (Asp278) interacts with Zn(2+). Glu315 contacts substrate. Zn(2+) contacts are provided by Glu316 and Asp361. Substrate-binding residues include Asp361, His364, Lys389, and Tyr396. His455 contributes to the Zn(2+) binding site.

Belongs to the peptidase M18 family. Tetrahedron-shaped homododecamer built from six homodimers. The cofactor is Zn(2+).

Its subcellular location is the cytoplasm. It catalyses the reaction Release of an N-terminal aspartate or glutamate from a peptide, with a preference for aspartate.. Its function is as follows. Likely to play an important role in intracellular protein and peptide metabolism. This chain is Probable aspartyl aminopeptidase, found in Ricinus communis (Castor bean).